Consider the following 149-residue polypeptide: UPF0178 protein VV1_1847 (149 aa).

This sequence belongs to the UPF0178 family.

In Vibrio vulnificus (strain CMCP6), this protein is UPF0178 protein VV1_1847.